The primary structure comprises 185 residues: dCTP deaminase (185 aa).

DCTP-binding positions include 108–113 (KSTYAR), 132–134 (TLE), Q153, Y167, and Q177. E134 serves as the catalytic Proton donor/acceptor.

It belongs to the dCTP deaminase family. As to quaternary structure, homotrimer.

It carries out the reaction dCTP + H2O + H(+) = dUTP + NH4(+). It participates in pyrimidine metabolism; dUMP biosynthesis; dUMP from dCTP (dUTP route): step 1/2. In terms of biological role, catalyzes the deamination of dCTP to dUTP. This is dCTP deaminase from Pelagibacter ubique (strain HTCC1062).